The chain runs to 377 residues: Histidine protein methyltransferase 1 (377 aa).

This sequence belongs to the methyltransferase superfamily. METTL18 family.

The protein resides in the cytoplasm. It localises to the nucleus. The catalysed reaction is L-histidyl-[protein] + S-adenosyl-L-methionine = N(tele)-methyl-L-histidyl-[protein] + S-adenosyl-L-homocysteine + H(+). In terms of biological role, protein-histidine N-methyltransferase that mediates methylation of RPL3 at 'His-243'. Methylates ribosome-associated RPL3, but not free RPL3, thereby regulating 60S subunit assembly. In addition to RPL3, mediates His methylation of other proteins. This Saccharomyces cerevisiae (strain ATCC 204508 / S288c) (Baker's yeast) protein is Histidine protein methyltransferase 1.